We begin with the raw amino-acid sequence, 451 residues long: tRNA modification GTPase MnmE (451 aa).

3 residues coordinate (6S)-5-formyl-5,6,7,8-tetrahydrofolate: Arg-23, Glu-80, and Lys-119. Positions 215 to 372 (GIKVVLTGQP…LRTVLLKTVG (158 aa)) constitute a TrmE-type G domain. Residue Asn-225 participates in K(+) binding. Residues 225-230 (NVGKSS), 244-250 (TEIPGTT), and 269-272 (DTAG) each bind GTP. Residue Ser-229 participates in Mg(2+) binding. Residues Thr-244, Ile-246, and Thr-249 each contribute to the K(+) site. A Mg(2+)-binding site is contributed by Thr-250. Lys-451 serves as a coordination point for (6S)-5-formyl-5,6,7,8-tetrahydrofolate.

It belongs to the TRAFAC class TrmE-Era-EngA-EngB-Septin-like GTPase superfamily. TrmE GTPase family. Homodimer. Heterotetramer of two MnmE and two MnmG subunits. K(+) is required as a cofactor.

Its subcellular location is the cytoplasm. Functionally, exhibits a very high intrinsic GTPase hydrolysis rate. Involved in the addition of a carboxymethylaminomethyl (cmnm) group at the wobble position (U34) of certain tRNAs, forming tRNA-cmnm(5)s(2)U34. The sequence is that of tRNA modification GTPase MnmE from Nitrosomonas eutropha (strain DSM 101675 / C91 / Nm57).